The sequence spans 753 residues: Synaptotagmin-like protein 5 (753 aa).

Residues 7 to 123 (FINLSFLLDH…IISGEWFLEE (117 aa)) enclose the RabBD domain. An FYVE-type zinc finger spans residues 64-106 (CVHCHKTLGLIFDRGDPCQACSLRVCSECRVTGLDGSWKCTVC). 3 disordered regions span residues 145-279 (RRSP…SREH), 297-359 (LTKS…LNSL), and 380-404 (LASGLSTNSQAGSDRKRSYLNVPDA). A Phosphoserine modification is found at Ser-147. The span at 150–174 (SEETQNQEQAQQCVDKSDTLSSVRQ) shows a compositional bias: polar residues. The span at 195–206 (TRGEIRTPKPES) shows a compositional bias: basic and acidic residues. Residues 214-223 (LDSQNLQSFK) show a composition bias toward polar residues. Positions 224–237 (SASGSDRGSTTSSD) are enriched in low complexity. The span at 249–275 (KSSYSNGGIPVTQRSPVPSAHSVTSIN) shows a compositional bias: polar residues. Residues 380-391 (LASGLSTNSQAG) are compositionally biased toward polar residues. 2 C2 domains span residues 429 to 550 (VTGE…DEWF) and 597 to 717 (KRGK…VDWM).

As to quaternary structure, binds RAB27A that has been activated by GTP-binding.

Its subcellular location is the membrane. In terms of biological role, may act as Rab effector protein and play a role in vesicle trafficking. Binds phospholipids. This Mus musculus (Mouse) protein is Synaptotagmin-like protein 5 (Sytl5).